Here is a 392-residue protein sequence, read N- to C-terminus: tRNA(Met) cytidine acetate ligase (392 aa).

Residues 7 to 20 (VVEY…HQLH), Gly101, Asn162, and 187 to 188 (RI) each bind ATP.

The protein belongs to the TmcAL family.

The protein resides in the cytoplasm. The catalysed reaction is cytidine(34) in elongator tRNA(Met) + acetate + ATP = N(4)-acetylcytidine(34) in elongator tRNA(Met) + AMP + diphosphate. Functionally, catalyzes the formation of N(4)-acetylcytidine (ac(4)C) at the wobble position of elongator tRNA(Met), using acetate and ATP as substrates. First activates an acetate ion to form acetyladenylate (Ac-AMP) and then transfers the acetyl group to tRNA to form ac(4)C34. This chain is tRNA(Met) cytidine acetate ligase, found in Listeria welshimeri serovar 6b (strain ATCC 35897 / DSM 20650 / CCUG 15529 / CIP 8149 / NCTC 11857 / SLCC 5334 / V8).